The following is a 471-amino-acid chain: UTP--glucose-1-phosphate uridylyltransferase (471 aa).

Residues 87-90 (LNGG), lysine 101, glutamine 164, and glycine 193 each bind UTP. 89–90 (GG) provides a ligand contact to substrate. Substrate-binding positions include histidine 194 and 222–224 (NSD). Residues aspartate 224 and lysine 362 each contribute to the UTP site.

The protein belongs to the UDPGP type 1 family.

The protein resides in the cytoplasm. The enzyme catalyses alpha-D-glucose 1-phosphate + UTP + H(+) = UDP-alpha-D-glucose + diphosphate. In terms of biological role, plays a central role as a glucosyl donor in cellular metabolic pathways. The chain is UTP--glucose-1-phosphate uridylyltransferase from Pyrus pyrifolia (Chinese pear).